A 78-amino-acid polypeptide reads, in one-letter code: DNA-directed RNA polymerase subunit omega (78 aa).

It belongs to the RNA polymerase subunit omega family. In terms of assembly, in cyanobacteria the RNAP catalytic core is composed of 2 alpha, 1 beta, 1 beta', 1 gamma and 1 omega subunit. When a sigma factor is associated with the core the holoenzyme is formed, which can initiate transcription.

The enzyme catalyses RNA(n) + a ribonucleoside 5'-triphosphate = RNA(n+1) + diphosphate. Its function is as follows. Promotes RNA polymerase assembly. Latches the N- and C-terminal regions of the beta' subunit thereby facilitating its interaction with the beta and alpha subunits. This is DNA-directed RNA polymerase subunit omega from Prochlorococcus marinus (strain MIT 9515).